A 274-amino-acid chain; its full sequence is 4-diphosphocytidyl-2-C-methyl-D-erythritol kinase (274 aa).

Lys8 is a catalytic residue. 92–102 (PSGAGLGGGSS) is an ATP binding site. The active site involves Asp134.

Belongs to the GHMP kinase family. IspE subfamily.

It carries out the reaction 4-CDP-2-C-methyl-D-erythritol + ATP = 4-CDP-2-C-methyl-D-erythritol 2-phosphate + ADP + H(+). It participates in isoprenoid biosynthesis; isopentenyl diphosphate biosynthesis via DXP pathway; isopentenyl diphosphate from 1-deoxy-D-xylulose 5-phosphate: step 3/6. Catalyzes the phosphorylation of the position 2 hydroxy group of 4-diphosphocytidyl-2C-methyl-D-erythritol. This Porphyromonas gingivalis (strain ATCC 33277 / DSM 20709 / CIP 103683 / JCM 12257 / NCTC 11834 / 2561) protein is 4-diphosphocytidyl-2-C-methyl-D-erythritol kinase.